The chain runs to 81 residues: Protein RALF-like 7 (81 aa).

Positions 1–29 are cleaved as a signal peptide; sequence MSARKKNRIHVFFVSIMIIISLVSGFGEG. 2 disulfides stabilise this stretch: Cys-46-Cys-54 and Cys-66-Cys-72.

This sequence belongs to the plant rapid alkalinization factor (RALF) family.

The protein localises to the secreted. Functionally, cell signaling peptide that may regulate plant stress, growth, and development. Mediates a rapid alkalinization of extracellular space by mediating a transient increase in the cytoplasmic Ca(2+) concentration leading to a calcium-dependent signaling events through a cell surface receptor and a concomitant activation of some intracellular mitogen-activated protein kinases. The polypeptide is Protein RALF-like 7 (RALFL7) (Arabidopsis thaliana (Mouse-ear cress)).